We begin with the raw amino-acid sequence, 274 residues long: Short-chain dehydrogenase/reductase bsc3 (274 aa).

Residues Ile-14, Tyr-170, Lys-174, Ile-203, and Thr-205 each contribute to the NADP(+) site. Tyr-170 acts as the Proton donor in catalysis. Lys-174 (lowers pKa of active site Tyr) is an active-site residue.

The protein belongs to the short-chain dehydrogenases/reductases (SDR) family.

It functions in the pathway mycotoxin biosynthesis. Its function is as follows. Short-chain dehydrogenase/reductase; part of the gene cluster that mediates the biosynthesis of the diterpene glucoside brassicicene C. In the first step of the brassicicene C biosynthesis, the bifunctional diterpene synthase bsc8 that possesses both prenyl transferase and terpene cyclase activity, converts isopentenyl diphosphate and dimethylallyl diphosphate into geranylgeranyl diphosphate (GGDP) that is further converted into fusicocca-2,10(14)-diene, the first precursor for brassicicene C. Fusicocca-2,10(14)-diene is then substrate of cytochrome P450 monooxygenase bsc1 for hydroxylation at the C-8 position. Oxidation at C-16 position to aldehyde is then catalyzed by the cytochrome P450 monooyxygenase bsc7, yielding fusicocca-2,10(14)-diene-8-beta,16-diol. Follows the isomerization of the double bond and reduction of aldehyde to alcohol catalyzed by the short-chain dehydrogenase/reductase bsc3 to yield the diol compound fusicocca-1,10(14)-diene-8 beta,16-diol. The next step is the oxidation at the C-3 position of fusicocca-2,10(14)-diene-8-beta,16-diol catalyzed by the alpha-ketoglutarate dependent dioxygenase bsc9, to produce a triol compound. Methylation of the hydroxy group at position 16 is performed by the methyltransferase bsc6. 16-O-methylation is followed by oxidation at the C-13 position to ketone and an alkyl shift of the methyl group leads to brassicicene C. Although the probable acetyltransferase bsc4 is included in the gene cluster, no acetylation reactions are necessary for brassicicene C biosynthesis. However, the fact that brassicicene E, which is a structurally related compound having an acetoxy group at position 12, was previously isolated from another strain of A.brassicicola suggests that the ATCC 96836 strain might also produce a small amount of brassicicene E. The polypeptide is Short-chain dehydrogenase/reductase bsc3 (Alternaria brassicicola (Dark leaf spot agent)).